Reading from the N-terminus, the 197-residue chain is Large ribosomal subunit protein bL17 (197 aa).

Residues 120 to 197 (DVPPADTGQG…EEEESEEDNT (78 aa)) form a disordered region. Residues 127–136 (GQGGSGGTRR) are compositionally biased toward gly residues. Residues 159 to 197 (SSDEESESVEEDEATAEEASADAEQGEAEEEEESEEDNT) show a composition bias toward acidic residues.

It belongs to the bacterial ribosomal protein bL17 family. As to quaternary structure, part of the 50S ribosomal subunit. Contacts protein L32.

This Salinibacter ruber (strain DSM 13855 / M31) protein is Large ribosomal subunit protein bL17.